A 175-amino-acid chain; its full sequence is Transcription factor E (175 aa).

Residues 3–88 (ENPLIQQVLF…TWKPSLEKVP (86 aa)) enclose the HTH TFE/IIEalpha-type domain.

The protein belongs to the TFE family. In terms of assembly, monomer. Interaction with RNA polymerase subunits RpoF and RpoE is necessary for Tfe stimulatory transcription activity. Able to interact with Tbp and RNA polymerase in the absence of DNA promoter. Interacts both with the preinitiation and elongation complexes.

Functionally, transcription factor that plays a role in the activation of archaeal genes transcribed by RNA polymerase. Facilitates transcription initiation by enhancing TATA-box recognition by TATA-box-binding protein (Tbp), and transcription factor B (Tfb) and RNA polymerase recruitment. Not absolutely required for transcription in vitro, but particularly important in cases where Tbp or Tfb function is not optimal. It dynamically alters the nucleic acid-binding properties of RNA polymerases by stabilizing the initiation complex and destabilizing elongation complexes. Seems to translocate with the RNA polymerase following initiation and acts by binding to the non template strand of the transcription bubble in elongation complexes. The sequence is that of Transcription factor E from Methanococcus maripaludis (strain DSM 14266 / JCM 13030 / NBRC 101832 / S2 / LL).